We begin with the raw amino-acid sequence, 420 residues long: Serine hydroxymethyltransferase (420 aa).

Residues Leu121 and 125–127 (GHL) each bind (6S)-5,6,7,8-tetrahydrofolate. Lys229 bears the N6-(pyridoxal phosphate)lysine mark.

It belongs to the SHMT family. In terms of assembly, homodimer. The cofactor is pyridoxal 5'-phosphate.

It localises to the cytoplasm. The enzyme catalyses (6R)-5,10-methylene-5,6,7,8-tetrahydrofolate + glycine + H2O = (6S)-5,6,7,8-tetrahydrofolate + L-serine. It functions in the pathway one-carbon metabolism; tetrahydrofolate interconversion. It participates in amino-acid biosynthesis; glycine biosynthesis; glycine from L-serine: step 1/1. Functionally, catalyzes the reversible interconversion of serine and glycine with tetrahydrofolate (THF) serving as the one-carbon carrier. This reaction serves as the major source of one-carbon groups required for the biosynthesis of purines, thymidylate, methionine, and other important biomolecules. Also exhibits THF-independent aldolase activity toward beta-hydroxyamino acids, producing glycine and aldehydes, via a retro-aldol mechanism. The protein is Serine hydroxymethyltransferase of Aggregatibacter actinomycetemcomitans (Actinobacillus actinomycetemcomitans).